Consider the following 251-residue polypeptide: Blue-light absorbing proteorhodopsin (251 aa).

The first 18 residues, 1-18, serve as a signal peptide directing secretion; it reads MGKLLLILGSAIALPSFA. Transmembrane regions (helical) follow at residues 30-50, 65-85, 97-117, 120-140, 144-164, 190-210, and 223-243; these read VGVS…FFFV, VSGL…GVWI, IDWL…LAAC, VAAS…GAGF, AGLA…LYMI, MMMI…AGYL, and LIYN…IWNV. Lys-233 is subject to N6-(retinylidene)lysine.

Belongs to the archaeal/bacterial/fungal opsin family. Post-translationally, contains one covalently linked retinal chromophore.

It is found in the cell membrane. Its function is as follows. Light-driven proton pump. May have a regulatory rather than energy harvesting function, based on light-induced opening of proton channels, to modulate cell physiology depending on light intensity variations. Could be, therefore, a sensory rhodopsin, potentially associated with a transducer component. In Gamma-proteobacterium Hot 75m4, this protein is Blue-light absorbing proteorhodopsin.